A 738-amino-acid chain; its full sequence is Alcohol dehydrogenase (quinone), dehydrogenase subunit (738 aa).

An N-terminal signal peptide occupies residues 1–35 (MISAVFGKRRSLSRTLTAGTICAALISGYATMASA). Pyrroloquinoline quinone is bound at residue Glu97. Cys143 and Cys144 form a disulfide bridge. Residue Arg149 participates in pyrroloquinoline quinone binding. Glu217 is a Ca(2+) binding site. Residue Thr278 participates in pyrroloquinoline quinone binding. Residues Asn298 and Asp343 each contribute to the Ca(2+) site. The Proton acceptor role is filled by Asp343. 2 residues coordinate pyrroloquinoline quinone: Lys370 and Ile584. Residues 634-738 (FDSKRTDNGY…NADGIPEQLP (105 aa)) enclose the Cytochrome c domain. Residues Cys650, Cys653, His654, and Met693 each coordinate heme c.

Belongs to the bacterial PQQ dehydrogenase family. In terms of assembly, the alcohol dehydrogenase multicomponent enzyme system is composed of a dehydrogenase subunit I (AdhA) and a cytochrome c subunit II (AdhB). Requires pyrroloquinoline quinone as cofactor. It depends on Ca(2+) as a cofactor. Heme c serves as cofactor.

It localises to the cell membrane. The catalysed reaction is ethanol + a ubiquinone = a ubiquinol + acetaldehyde. Functionally, dehydrogenase component of the alcohol dehydrogenase multicomponent enzyme system which is involved in the production of acetic acid and in the ethanol oxidase respiratory chain. Quinohemoprotein alcohol dehydrogenase (ADH) catalyzes the oxidation of ethanol to acetaldehyde by transferring electrons to the ubiquinone embedded in the membrane phospholipids. The electrons transfer from ethanol to membranous ubiquinone occurs from pyrroloquinoline quinone (PQQ) to one heme c in subunit I (AdhA), and finally to two heme c in subunit II (AdhB). Besides ubiquinone reduction, ADH also has a ubiquinol (QH2) oxidation reaction which mediates electron transfer from ubiquinol to the non-energy generating bypass oxidase system. The electrons transfer occurs from ubiquinol (QH2) to the additional heme c within subunit II (AdhB). The sequence is that of Alcohol dehydrogenase (quinone), dehydrogenase subunit (adhA) from Gluconacetobacter polyoxogenes (Acetobacter polyoxogenes).